The following is a 200-amino-acid chain: UPF0488 protein CG14286 (200 aa).

2 disordered regions span residues 1 to 28 (MHKRRTAKSINKPPPIQGAIKKPTPVAE) and 139 to 174 (KDFRFNFPSPAEDTSSKEPQPVQDFDPSSLQPAEAG).

It belongs to the UPF0488 family.

The polypeptide is UPF0488 protein CG14286 (Drosophila melanogaster (Fruit fly)).